A 445-amino-acid chain; its full sequence is MAELKYISGFGNECASEDPRCPGSLPKGQNNPQVCPYNLYAEQLSGSAFTCPRNTNKRSWLYRILPSVSHKPFESIDQGHVTHNWDEVGPDPNQLRWKPFEIPKASEKKVDFVSGLYTLCGAGDIKSNNGLAVHIFLCNSSMENRCFYNSDGDFLIVPQKGKLLIYTEFGKMSLQPNEICVIQRGMRFSVDVFEETRGYILEVYGVHFELPDLGPIGANGLANPRDFLIPVAWYEDRRVPGGYTVINKFQGKLFACKQDVSPFNVVAWHGNYTPYKYNLENFMVINAVAFDHADPSIFTVLTAKSLRPGVAIADFVIFPPRWGVADKTFRPPYYHRNCMSEFMGLIKGHYEAKQGGFLPGGGSLHSAMTPHGPDADCFEKASKAKLEPERIADGTMAFMFESSLSLAVTKWGLKTCSCLDENYYKCWEPLRSHFTPNSRSPTEPK.

K98 carries the post-translational modification N6-acetyllysine. 3 residues coordinate Fe cation: H335, E341, and H371. At K414 the chain carries N6-succinyllysine.

Belongs to the homogentisate dioxygenase family. In terms of assembly, homohexamer arranged as a dimer of trimers. The cofactor is Fe cation.

The enzyme catalyses homogentisate + O2 = 4-maleylacetoacetate + H(+). Its pathway is amino-acid degradation; L-phenylalanine degradation; acetoacetate and fumarate from L-phenylalanine: step 4/6. In terms of biological role, catalyzes the conversion of homogentisate to maleylacetoacetate. The chain is Homogentisate 1,2-dioxygenase (Hgd) from Mus musculus (Mouse).